A 428-amino-acid chain; its full sequence is Cyclic AMP-responsive element-binding protein 3-like protein 3-B (428 aa).

Residues 1-286 (MDHYSDQGGD…VMNGSNKPVQ (286 aa)) lie on the Cytoplasmic side of the membrane. Residues 67–83 (VSGSPVWSPSPSDSGIS) show a composition bias toward low complexity. The interval 67–104 (VSGSPVWSPSPSDSGISEDPHSDHIDSPPPNASPPMEP) is disordered. Pro residues predominate over residues 93 to 103 (SPPPNASPPME). The region spanning 210-273 (ILKKIRRKIR…ISLMEQLRRL (64 aa)) is the bZIP domain. Residues 212 to 241 (KKIRRKIRNKQSAQESRKKKKEYIDGLESR) form a basic motif region. Positions 252–273 (LQRKVFQLEKCNISLMEQLRRL) are leucine-zipper. The helical; Signal-anchor for type II membrane protein transmembrane segment at 287 to 303 (AGTCVLVLLLSFTLILL) threads the bilayer. Topologically, residues 304 to 428 (PNLKPFTDTK…SRRSPHADDM (125 aa)) are lumenal. Residues 381-428 (TEYDPESHNHSFDQHDEHHHGDPITGHVATVTLNPRRGSRRSPHADDM) are disordered. Positions 385–402 (PESHNHSFDQHDEHHHGD) are enriched in basic and acidic residues. Asn-389 carries N-linked (GlcNAc...) asparagine glycosylation.

It belongs to the bZIP family. ATF subfamily. In terms of assembly, binds DNA as a dimer. Controlled by regulated intramembrane proteolysis (RIP). A fragment containing the cytoplasmic transcription factor domain is released by proteolysis. The cleavage seems to be performed sequentially by site-1 and site-2 proteases.

The protein resides in the endoplasmic reticulum membrane. Its subcellular location is the nucleus. Functionally, transcriptional activator. Binds the cAMP response element (CRE). Activates transcription through box-B element and CRE. Seems to function synergistically with atf6. Regulates FGF21 transcription. In Danio rerio (Zebrafish), this protein is Cyclic AMP-responsive element-binding protein 3-like protein 3-B (creb3l3b).